Here is a 205-residue protein sequence, read N- to C-terminus: High frequency lysogenization protein HflD homolog (205 aa).

Belongs to the HflD family.

It localises to the cytoplasm. Its subcellular location is the cell inner membrane. The chain is High frequency lysogenization protein HflD homolog from Shewanella baltica (strain OS185).